Consider the following 684-residue polypeptide: MSAQDFLVELGTEELPPKTLVSLADAFLAGIEKGLSGAGLTYSAKQVYAAPRRLAVLITALATQQPDRSVNLDGPPRQAAFDADGNPTQAALGFAKKCGVDLSEIDQSGPKLRYSQTILGKPTTSLLPTIVEDSLNDLPIAKRMRWGARKEEFVRPTQWLVMLFGDQVVDCTILAQSAGRHSRGHRFHHPQDVRISSPAGYLSDLRAAHVLADFNERRQIISKRVDELATQQEGTAIVPPSLLDEVAGLVEWPVPLVCSFEERFLEVPQEALITTMQDNQKYFCLLDAEGKLLPRFITVANIESKDPAQIVAGNEKVVRPRLTDAEFFFKQDKKQKLETFNDRLKNVVFQAQLGSVFDKAERVSKLAAYIAPRIGGDAQRAARAGLLSKCDLSSEMVGEFPEMQGIAGYYYAKADGEPEDVALALNEQYMPRGAGAELPTTLTGAAVAIADKLDTLVGIFGIGMLPTGSKDPYALRRAALGILRILIEKKLDLNLVETVKFAVTQFGAKIKPAGLAEQVLDFIFDRLRARYEDEGVDVAVYLSVRALQPASALDFDQRVQAVQAFRKLPQAAALAAVNKRVSNLLSKAEGSIAQTVEPKYFDNANEFSLYSAIQQADHAVQPMAAERQYSESLARLAMLREPVDAFFEAVMVNAEDANVRANRYALLSRLRGLFLGVADISLLG.

This sequence belongs to the class-II aminoacyl-tRNA synthetase family. In terms of assembly, tetramer of two alpha and two beta subunits.

Its subcellular location is the cytoplasm. It carries out the reaction tRNA(Gly) + glycine + ATP = glycyl-tRNA(Gly) + AMP + diphosphate. In Pseudomonas savastanoi pv. phaseolicola (strain 1448A / Race 6) (Pseudomonas syringae pv. phaseolicola (strain 1448A / Race 6)), this protein is Glycine--tRNA ligase beta subunit.